Consider the following 209-residue polypeptide: GTP cyclohydrolase 1 (209 aa).

Zn(2+) contacts are provided by Cys100, His103, and Cys171.

It belongs to the GTP cyclohydrolase I family. Toroid-shaped homodecamer, composed of two pentamers of five dimers.

The catalysed reaction is GTP + H2O = 7,8-dihydroneopterin 3'-triphosphate + formate + H(+). It participates in cofactor biosynthesis; 7,8-dihydroneopterin triphosphate biosynthesis; 7,8-dihydroneopterin triphosphate from GTP: step 1/1. In Ralstonia nicotianae (strain ATCC BAA-1114 / GMI1000) (Ralstonia solanacearum), this protein is GTP cyclohydrolase 1.